A 552-amino-acid polypeptide reads, in one-letter code: Probable bifunctional methylthioribose-1-phosphate isomerase/methylthioribulose-1-phosphate dehydratase (552 aa).

The interval 1–333 (MRPIDDSSLT…VVTEHGVVHG (333 aa)) is methylthioribose-1-phosphate isomerase activity. Substrate-binding positions include 49 to 51 (RGA), Arg-91, and Gln-195. The active-site Proton donor is Asp-236. Substrate is bound at residue 246 to 247 (NK). Residues 334 to 535 (TVAAEPGARI…AVCELVLRTG (202 aa)) are methylthioribulose-1-phosphate dehydratase activity. 2 residues coordinate Zn(2+): His-427 and His-429.

The protein in the N-terminal section; belongs to the eIF-2B alpha/beta/delta subunits family. MtnA subfamily. In the C-terminal section; belongs to the aldolase class II family. MtnB subfamily. It depends on Zn(2+) as a cofactor.

The catalysed reaction is 5-(methylsulfanyl)-alpha-D-ribose 1-phosphate = 5-(methylsulfanyl)-D-ribulose 1-phosphate. It carries out the reaction 5-(methylsulfanyl)-D-ribulose 1-phosphate = 5-methylsulfanyl-2,3-dioxopentyl phosphate + H2O. It functions in the pathway amino-acid biosynthesis; L-methionine biosynthesis via salvage pathway; L-methionine from S-methyl-5-thio-alpha-D-ribose 1-phosphate: step 1/6. Its pathway is amino-acid biosynthesis; L-methionine biosynthesis via salvage pathway; L-methionine from S-methyl-5-thio-alpha-D-ribose 1-phosphate: step 2/6. In terms of biological role, bifunctional protein that catalyzes the interconversion of methylthioribose-1-phosphate (MTR-1-P) into methylthioribulose-1-phosphate (MTRu-1-P), and the dehydration of methylthioribulose-1-phosphate (MTRu-1-P) into 2,3-diketo-5-methylthiopentyl-1-phosphate (DK-MTP-1-P). This chain is Probable bifunctional methylthioribose-1-phosphate isomerase/methylthioribulose-1-phosphate dehydratase (mtnAB), found in Nocardia farcinica (strain IFM 10152).